The following is a 63-amino-acid chain: Large ribosomal subunit protein uL30 (63 aa).

The protein belongs to the universal ribosomal protein uL30 family. Part of the 50S ribosomal subunit.

This is Large ribosomal subunit protein uL30 from Geobacillus stearothermophilus (Bacillus stearothermophilus).